Here is a 133-residue protein sequence, read N- to C-terminus: Small ribosomal subunit protein bS6 (133 aa).

It belongs to the bacterial ribosomal protein bS6 family.

Its function is as follows. Binds together with bS18 to 16S ribosomal RNA. In Chlorobium phaeovibrioides (strain DSM 265 / 1930) (Prosthecochloris vibrioformis (strain DSM 265)), this protein is Small ribosomal subunit protein bS6.